A 396-amino-acid chain; its full sequence is Phosphoglycerate kinase (396 aa).

Substrate-binding positions include 21 to 23 (DLN), R36, 59 to 62 (HLGR), R113, and R146. Residues K197, E319, and 345-348 (GGDT) each bind ATP.

The protein belongs to the phosphoglycerate kinase family. As to quaternary structure, monomer.

It is found in the cytoplasm. It catalyses the reaction (2R)-3-phosphoglycerate + ATP = (2R)-3-phospho-glyceroyl phosphate + ADP. Its pathway is carbohydrate degradation; glycolysis; pyruvate from D-glyceraldehyde 3-phosphate: step 2/5. In Legionella pneumophila (strain Corby), this protein is Phosphoglycerate kinase.